Reading from the N-terminus, the 549-residue chain is Glucose-6-phosphate isomerase (549 aa).

Glu-355 serves as the catalytic Proton donor. Active-site residues include His-386 and Lys-514.

It belongs to the GPI family.

Its subcellular location is the cytoplasm. The enzyme catalyses alpha-D-glucose 6-phosphate = beta-D-fructose 6-phosphate. It functions in the pathway carbohydrate biosynthesis; gluconeogenesis. Its pathway is carbohydrate degradation; glycolysis; D-glyceraldehyde 3-phosphate and glycerone phosphate from D-glucose: step 2/4. Functionally, catalyzes the reversible isomerization of glucose-6-phosphate to fructose-6-phosphate. This Enterobacter sp. (strain 638) protein is Glucose-6-phosphate isomerase.